A 234-amino-acid chain; its full sequence is tRNA1(Val) (adenine(37)-N6)-methyltransferase (234 aa).

Belongs to the methyltransferase superfamily. tRNA (adenine-N(6)-)-methyltransferase family.

It is found in the cytoplasm. The enzyme catalyses adenosine(37) in tRNA1(Val) + S-adenosyl-L-methionine = N(6)-methyladenosine(37) in tRNA1(Val) + S-adenosyl-L-homocysteine + H(+). In terms of biological role, specifically methylates the adenine in position 37 of tRNA(1)(Val) (anticodon cmo5UAC). This Pedobacter heparinus (strain ATCC 13125 / DSM 2366 / CIP 104194 / JCM 7457 / NBRC 12017 / NCIMB 9290 / NRRL B-14731 / HIM 762-3) protein is tRNA1(Val) (adenine(37)-N6)-methyltransferase.